The sequence spans 200 residues: 3-isopropylmalate dehydratase small subunit (200 aa).

It belongs to the LeuD family. LeuD type 1 subfamily. In terms of assembly, heterodimer of LeuC and LeuD.

It carries out the reaction (2R,3S)-3-isopropylmalate = (2S)-2-isopropylmalate. The protein operates within amino-acid biosynthesis; L-leucine biosynthesis; L-leucine from 3-methyl-2-oxobutanoate: step 2/4. Functionally, catalyzes the isomerization between 2-isopropylmalate and 3-isopropylmalate, via the formation of 2-isopropylmaleate. This is 3-isopropylmalate dehydratase small subunit from Vibrio cholerae serotype O1 (strain ATCC 39541 / Classical Ogawa 395 / O395).